We begin with the raw amino-acid sequence, 380 residues long: Transaldolase (380 aa).

Residue lysine 141 is the Schiff-base intermediate with substrate of the active site.

This sequence belongs to the transaldolase family. Type 2 subfamily.

Its subcellular location is the cytoplasm. The catalysed reaction is D-sedoheptulose 7-phosphate + D-glyceraldehyde 3-phosphate = D-erythrose 4-phosphate + beta-D-fructose 6-phosphate. The protein operates within carbohydrate degradation; pentose phosphate pathway; D-glyceraldehyde 3-phosphate and beta-D-fructose 6-phosphate from D-ribose 5-phosphate and D-xylulose 5-phosphate (non-oxidative stage): step 2/3. Its function is as follows. Transaldolase is important for the balance of metabolites in the pentose-phosphate pathway. In Trichodesmium erythraeum (strain IMS101), this protein is Transaldolase.